The sequence spans 254 residues: Large ribosomal subunit protein uL4 (254 aa).

It belongs to the universal ribosomal protein uL4 family. In terms of assembly, part of the 50S ribosomal subunit.

Its function is as follows. One of the primary rRNA binding proteins, this protein initially binds near the 5'-end of the 23S rRNA. It is important during the early stages of 50S assembly. It makes multiple contacts with different domains of the 23S rRNA in the assembled 50S subunit and ribosome. In terms of biological role, forms part of the polypeptide exit tunnel. This is Large ribosomal subunit protein uL4 from Methanothermobacter thermautotrophicus (strain ATCC 29096 / DSM 1053 / JCM 10044 / NBRC 100330 / Delta H) (Methanobacterium thermoautotrophicum).